The following is a 21-amino-acid chain: NEQSGKSQTVIVGPWGAQVST.

The span at 1–10 shows a compositional bias: polar residues; the sequence is NEQSGKSQTV. A disordered region spans residues 1-21; the sequence is NEQSGKSQTVIVGPWGAQVST.

This sequence belongs to the jacalin lectin family. In terms of assembly, tetramer of four alpha chains associated with two or four beta chains.

Its function is as follows. D-galactose-specific lectin, binds the T-antigen structure Gal-beta1,3-GalNAc (Thomsen-Friedenreich-antigen-specific lectin). Potent and selective stimulant of distinct T- and B-cell functions. Shows a unique ability to specifically recognize IgA-1 from human serum. The chain is Agglutinin beta-2 chain from Artocarpus integer (Jack fruit).